Consider the following 602-residue polypeptide: MRGAFLAAAAAVAGTAMADVAHMRRHGHDSFHHNRAYQPEVPAEGDENCECTTKVITITGPPTLVPINTPAPEPSSSSSSEVPSVPSSESSVVTSEAVTTLHSTSTATVTVVTTPGVDATGAQTPTGGVPGTPEASSPAGTPEASTPAVPATSESPLPTPGVTSFSSTGIYTIPATTVTVRDTTTVCGATTTELPSGTHTFGGVTTVVSTATTVTCPVATVEPSGSTVTSKIYTTTYVCPSAGTYTIAPTTTYVPTSTVVVYPTPATITPGTYTQDEQTVTVTRTDFTYVCPFTGNDQPTSAPVASTSAVPVTTTAAPSTTSAVASSSASASSTATAVPTGVSGQQMGMTYSPYTNEGGCQSKDQVLKDVALIKQKGFTHVRVYSTDCNGLEYIGEAARENGLKMIIGVFISSTGISGAQEQVTAITKWAQWDLVTLVVVGNEAIQNGYTDASSLAGFISSCKSSFQASGYSGQVTTTEPINVWQQSGSALCGAVDILGANLHPFFNADVTPDQAGSFVRAQIKDLEAVCNKDVINLETGWPSAGNANGKAVPGTAQQAAAIKALVEEVGSQSVFFSYSNDLWKDAGEFDVERYWGCIDQFK.

The first 18 residues, 1–18, serve as a signal peptide directing secretion; that stretch reads MRGAFLAAAAAVAGTAMA. Disordered regions lie at residues 61 to 94 and 116 to 166; these read PPTLVPINTPAPEPSSSSSSEVPSVPSSESSVVT and GVDA…TSFS. The segment covering 74-94 has biased composition (low complexity); it reads PSSSSSSEVPSVPSSESSVVT. The span at 152 to 166 shows a compositional bias: polar residues; it reads TSESPLPTPGVTSFS. Glutamate 443 acts as the Proton donor in catalysis. The active-site Nucleophile is glutamate 538.

This sequence belongs to the glycosyl hydrolase 17 family.

The protein resides in the secreted. It is found in the cell wall. The catalysed reaction is Hydrolysis of terminal, non-reducing beta-D-glucosyl residues with release of beta-D-glucose.. It participates in glycan metabolism; cellulose degradation. In terms of biological role, beta-glucosidases are one of a number of cellulolytic enzymes involved in the degradation of cellulosic biomass. Catalyzes the last step releasing glucose from the inhibitory cellobiose. The sequence is that of Probable beta-glucosidase btgE (btgE) from Aspergillus flavus (strain ATCC 200026 / FGSC A1120 / IAM 13836 / NRRL 3357 / JCM 12722 / SRRC 167).